We begin with the raw amino-acid sequence, 457 residues long: Phosphoglucosamine mutase (457 aa).

Ser109 serves as the catalytic Phosphoserine intermediate. 4 residues coordinate Mg(2+): Ser109, Asp251, Asp253, and Asp255. Residue Ser109 is modified to Phosphoserine.

This sequence belongs to the phosphohexose mutase family. Mg(2+) serves as cofactor. In terms of processing, activated by phosphorylation.

The catalysed reaction is alpha-D-glucosamine 1-phosphate = D-glucosamine 6-phosphate. Catalyzes the conversion of glucosamine-6-phosphate to glucosamine-1-phosphate. The sequence is that of Phosphoglucosamine mutase from Bdellovibrio bacteriovorus (strain ATCC 15356 / DSM 50701 / NCIMB 9529 / HD100).